A 330-amino-acid polypeptide reads, in one-letter code: DNA-directed RNA polymerase subunit alpha (330 aa).

The segment at 1–231 (MQTNLLKPKT…EQLAVFAQLE (231 aa)) is alpha N-terminal domain (alpha-NTD). The tract at residues 250 to 330 (FDPILLRPVD…NWPPAGLDKR (81 aa)) is alpha C-terminal domain (alpha-CTD).

This sequence belongs to the RNA polymerase alpha chain family. As to quaternary structure, homodimer. The RNAP catalytic core consists of 2 alpha, 1 beta, 1 beta' and 1 omega subunit. When a sigma factor is associated with the core the holoenzyme is formed, which can initiate transcription.

It carries out the reaction RNA(n) + a ribonucleoside 5'-triphosphate = RNA(n+1) + diphosphate. Functionally, DNA-dependent RNA polymerase catalyzes the transcription of DNA into RNA using the four ribonucleoside triphosphates as substrates. This is DNA-directed RNA polymerase subunit alpha from Paracidovorax citrulli (strain AAC00-1) (Acidovorax citrulli).